We begin with the raw amino-acid sequence, 394 residues long: Elongation factor Tu 1 (394 aa).

One can recognise a tr-type G domain in the interval 10 to 204 (KPHVNVGTIG…ALDNYIPEPE (195 aa)). The interval 19–26 (GHVDHGKT) is G1. 19–26 (GHVDHGKT) provides a ligand contact to GTP. T26 contacts Mg(2+). Positions 60 to 64 (GITIS) are G2. Residues 81-84 (DCPG) form a G3 region. Residues 81 to 85 (DCPGH) and 136 to 139 (NKCD) each bind GTP. Residues 136–139 (NKCD) form a G4 region. Positions 174–176 (SAL) are G5.

This sequence belongs to the TRAFAC class translation factor GTPase superfamily. Classic translation factor GTPase family. EF-Tu/EF-1A subfamily. As to quaternary structure, monomer.

The protein resides in the cytoplasm. The catalysed reaction is GTP + H2O = GDP + phosphate + H(+). Its function is as follows. GTP hydrolase that promotes the GTP-dependent binding of aminoacyl-tRNA to the A-site of ribosomes during protein biosynthesis. This is Elongation factor Tu 1 from Photobacterium profundum (strain SS9).